A 294-amino-acid chain; its full sequence is Survival motor neuron protein (294 aa).

The segment covering 1-10 (MAMSSGGSGS) has biased composition (gly residues). The disordered stretch occupies residues 1 to 32 (MAMSSGGSGSGVPEQEDAVLFRRGTGQSDDSD). Ala-2 is subject to N-acetylalanine. Phosphoserine; by PKA occurs at positions 4, 5, and 8. The segment at 13-44 (PEQEDAVLFRRGTGQSDDSDIWDDTALIKAYD) is P1 (binding site for GEMIN2). Thr-25 carries the post-translational modification Phosphothreonine. Ser-28 and Ser-31 each carry phosphoserine. Residue Lys-51 forms a Glycyl lysine isopeptide (Lys-Gly) (interchain with G-Cter in SUMO2) linkage. The segment at 60 to 88 (CETSGKSKTTPKRKPAKKNKSQKKNTAAS) is disordered. Residues 68-82 (TTPKRKPAKKNKSQK) show a composition bias toward basic residues. Thr-69 is subject to Phosphothreonine. Thr-85 carries the post-translational modification Phosphothreonine; by PKA. The Tudor domain occupies 91–151 (QWKVGDKCSA…LSPICEVANN (61 aa)). The required for interaction with RPP20/POP7 stretch occupies residues 97–209 (KCSAIWSEDG…MPGPRLGPGK (113 aa)). Positions 156 to 166 (AQENENESQVS) are enriched in low complexity. The tract at residues 156–222 (AQENENESQV…KFNGPPPPPP (67 aa)) is disordered. Ser-187 carries the post-translational modification Phosphoserine; by PKA. Pro residues predominate over residues 194-204 (LPPPPPMPGPR). Positions 206–215 (GPGKPGLKFN) are enriched in low complexity. Lys-209 participates in a covalent cross-link: Glycyl lysine isopeptide (Lys-Gly) (interchain with G-Cter in SUMO2). Positions 240–267 (PPIIPPPPPICPDSLDDADALGSMLISW) are P2 (binding site for SM B). The required for interaction with SYNCRIP stretch occupies residues 279–294 (GFRQNQKEGRCSHSLN).

It belongs to the SMN family. Homooligomer; may form higher order homooligomers in the dimer to octamer range. Part of the core SMN complex that contains SMN1, GEMIN2/SIP1, DDX20/GEMIN3, GEMIN4, GEMIN5, GEMIN6, GEMIN7, GEMIN8 and STRAP/UNRIP. Part of the SMN-Sm complex that contains SMN1, GEMIN2/SIP1, DDX20/GEMIN3, GEMIN4, GEMIN5, GEMIN6, GEMIN7, GEMIN8, STRAP/UNRIP and the Sm proteins SNRPB, SNRPD1, SNRPD2, SNRPD3, SNRPE, SNRPF and SNRPG. Component of an import snRNP complex composed of KPNB1, RNUT1, SMN1 and ZNF259. Interacts with DDX20, FBL, NOLA1, RNUT1, SYNCRIP and with several spliceosomal snRNP core Sm proteins, including SNRPB, SNRPD1, SNRPD2, SNRPD3, SNRPE and ILF3. Interacts with GEMIN2; the interaction is direct. Interacts with GEMIN3; the interaction is direct. Interacts with GEMIN8; the interaction is direct. Interacts with SNRPB; the interaction is direct. Interacts (via Tudor domain) with SNRPD1 (via C-terminus); the interaction is direct. Interacts with SNRPD2; the interaction is direct. Interacts (via Tudor domain) with SNRPD3 (via C-terminus); the interaction is direct. Interacts with SNRPE; the interaction is direct. Interacts with OSTF1, LSM10, LSM11 and RPP20/POP7. Interacts (via C-terminal region) with ZPR1 (via C-terminal region). Interacts (via Tudor domain) with COIL. Interacts with SETX; recruits SETX to POLR2A. Interacts with POLR2A (via the C-terminal domain (CTD)). Interacts with PRMT5. Interacts with XRN2. Interacts (via C-terminus) with FMR1 (via C-terminus); the interaction is direct and occurs in a RNA-independent manner. Interacts (via Tudor domain) with SF3B2 ('Arg-508'-methylated form). Interacts with WRAP53/TCAB1. Interacts (via Tudor domain) with ELAVL4 in an RNA-independent manner; the interaction is required for localization of ELAVL4 to RNA granules. Interacts with FRG1.

Its subcellular location is the nucleus. The protein resides in the gem. The protein localises to the cajal body. It localises to the cytoplasm. It is found in the cytoplasmic granule. Its subcellular location is the perikaryon. The protein resides in the cell projection. The protein localises to the neuron projection. It localises to the axon. It is found in the myofibril. Its subcellular location is the sarcomere. The protein resides in the z line. The SMN complex catalyzes the assembly of small nuclear ribonucleoproteins (snRNPs), the building blocks of the spliceosome, and thereby plays an important role in the splicing of cellular pre-mRNAs. Most spliceosomal snRNPs contain a common set of Sm proteins SNRPB, SNRPD1, SNRPD2, SNRPD3, SNRPE, SNRPF and SNRPG that assemble in a heptameric protein ring on the Sm site of the small nuclear RNA to form the core snRNP (Sm core). In the cytosol, the Sm proteins SNRPD1, SNRPD2, SNRPE, SNRPF and SNRPG are trapped in an inactive 6S pICln-Sm complex by the chaperone CLNS1A that controls the assembly of the core snRNP. To assemble core snRNPs, the SMN complex accepts the trapped 5Sm proteins from CLNS1A forming an intermediate. Binding of snRNA inside 5Sm ultimately triggers eviction of the SMN complex, thereby allowing binding of SNRPD3 and SNRPB to complete assembly of the core snRNP. Within the SMN complex, SMN1 acts as a structural backbone and together with GEMIN2 it gathers the Sm complex subunits. Ensures the correct splicing of U12 intron-containing genes that may be important for normal motor and proprioceptive neurons development. Also required for resolving RNA-DNA hybrids created by RNA polymerase II, that form R-loop in transcription terminal regions, an important step in proper transcription termination. May also play a role in the metabolism of small nucleolar ribonucleoprotein (snoRNPs). The chain is Survival motor neuron protein (SMN1) from Pongo abelii (Sumatran orangutan).